The primary structure comprises 404 residues: Nicotinate phosphoribosyltransferase (404 aa).

His-224 is subject to Phosphohistidine; by autocatalysis.

This sequence belongs to the NAPRTase family. In terms of processing, transiently phosphorylated on a His residue during the reaction cycle. Phosphorylation strongly increases the affinity for substrates and increases the rate of nicotinate D-ribonucleotide production. Dephosphorylation regenerates the low-affinity form of the enzyme, leading to product release.

The catalysed reaction is nicotinate + 5-phospho-alpha-D-ribose 1-diphosphate + ATP + H2O = nicotinate beta-D-ribonucleotide + ADP + phosphate + diphosphate. The protein operates within cofactor biosynthesis; NAD(+) biosynthesis; nicotinate D-ribonucleotide from nicotinate: step 1/1. Its function is as follows. Catalyzes the synthesis of beta-nicotinate D-ribonucleotide from nicotinate and 5-phospho-D-ribose 1-phosphate at the expense of ATP. This Proteus mirabilis (strain HI4320) protein is Nicotinate phosphoribosyltransferase.